The chain runs to 1074 residues: Carbamoyl phosphate synthase large chain (1074 aa).

The tract at residues M1–D399 is carboxyphosphate synthetic domain. ATP-binding residues include R129, R169, G175, G176, E208, V210, E215, G241, I242, H243, Q284, and E296. In terms of domain architecture, ATP-grasp 1 spans K133–I325. Residues Q284, E296, and N298 each contribute to the Mg(2+) site. Mn(2+) contacts are provided by Q284, E296, and N298. Residues I400–L543 are oligomerization domain. The carbamoyl phosphate synthetic domain stretch occupies residues N544–N933. In terms of domain architecture, ATP-grasp 2 spans N674–A865. Residues R710, D749, L751, E756, G781, I782, H783, S784, Q824, and E836 each coordinate ATP. Q824, E836, and N838 together coordinate Mg(2+). Mn(2+) is bound by residues Q824, E836, and N838. Residues N932–L1074 enclose the MGS-like domain. Residues L934–L1074 form an allosteric domain region.

It belongs to the CarB family. In terms of assembly, composed of two chains; the small (or glutamine) chain promotes the hydrolysis of glutamine to ammonia, which is used by the large (or ammonia) chain to synthesize carbamoyl phosphate. Tetramer of heterodimers (alpha,beta)4. Requires Mg(2+) as cofactor. Mn(2+) is required as a cofactor.

It catalyses the reaction hydrogencarbonate + L-glutamine + 2 ATP + H2O = carbamoyl phosphate + L-glutamate + 2 ADP + phosphate + 2 H(+). The enzyme catalyses hydrogencarbonate + NH4(+) + 2 ATP = carbamoyl phosphate + 2 ADP + phosphate + 2 H(+). It participates in amino-acid biosynthesis; L-arginine biosynthesis; carbamoyl phosphate from bicarbonate: step 1/1. The protein operates within pyrimidine metabolism; UMP biosynthesis via de novo pathway; (S)-dihydroorotate from bicarbonate: step 1/3. Its function is as follows. Large subunit of the glutamine-dependent carbamoyl phosphate synthetase (CPSase). CPSase catalyzes the formation of carbamoyl phosphate from the ammonia moiety of glutamine, carbonate, and phosphate donated by ATP, constituting the first step of 2 biosynthetic pathways, one leading to arginine and/or urea and the other to pyrimidine nucleotides. The large subunit (synthetase) binds the substrates ammonia (free or transferred from glutamine from the small subunit), hydrogencarbonate and ATP and carries out an ATP-coupled ligase reaction, activating hydrogencarbonate by forming carboxy phosphate which reacts with ammonia to form carbamoyl phosphate. The sequence is that of Carbamoyl phosphate synthase large chain from Methanothrix thermoacetophila (strain DSM 6194 / JCM 14653 / NBRC 101360 / PT) (Methanosaeta thermophila).